Consider the following 553-residue polypeptide: Putative transport protein CKO_00031 (553 aa).

The next 5 membrane-spanning stretches (helical) occupy residues 4 to 24 (IALT…IGNI), 28 to 48 (GVGF…HFVD), 65 to 85 (FGLI…FFAS), 95 to 115 (LFAI…HKIF), and 158 to 178 (MSYA…MWLM). 2 consecutive RCK C-terminal domains span residues 192 to 276 (QHED…VIGQ) and 279 to 361 (DTSL…VVGN). The next 6 helical transmembrane spans lie at 371 to 391 (MLPV…PLFV), 393 to 413 (GFPV…ALIL), 437 to 457 (LGIV…FIDT), 464 to 484 (LSWI…VGLL), 493 to 513 (YLTL…LAFA), and 533 to 553 (LVMF…WGLG).

It belongs to the AAE transporter (TC 2.A.81) family. YidE subfamily.

The protein localises to the cell membrane. The protein is Putative transport protein CKO_00031 of Citrobacter koseri (strain ATCC BAA-895 / CDC 4225-83 / SGSC4696).